The sequence spans 960 residues: Lon protease homolog, mitochondrial (960 aa).

The N-terminal 56 residues, 1–56 (MYRAGALVLRSATLRRTRFLAAHQNFATISSQRSSVLLAKSLESSIGGAGNQKKFY), are a transit peptide targeting the mitochondrion. A Lon N-terminal domain is found at 92–352 (VPILAINRYP…IALLLIQKEK (261 aa)). The interval 195–250 (PKTDTPLNGRRARGKRAGLPPTPPPTPPLSTPTSAPEASATSPEEKEEKKDPERKG) is disordered. Residues 214-224 (PPTPPPTPPLS) are compositionally biased toward pro residues. Over residues 225–236 (TPTSAPEASATS) the composition is skewed to low complexity. The span at 237–250 (PEEKEEKKDPERKG) shows a compositional bias: basic and acidic residues. 505–512 (GPPGVGKT) is an ATP binding site. A disordered region spans residues 712-748 (EQQPEDEQPAATTAISENSDAEPVSTPSDPPTFTPEK). The region spanning 773 to 960 (VTPPGVIMGL…YDELYEHLFQ (188 aa)) is the Lon proteolytic domain. Active-site residues include Ser867 and Lys910.

This sequence belongs to the peptidase S16 family. In terms of assembly, homohexamer or homoheptamer. Organized in a ring with a central cavity.

It is found in the mitochondrion matrix. It carries out the reaction Hydrolysis of proteins in presence of ATP.. ATP-dependent serine protease that mediates the selective degradation of misfolded, unassembled or oxidatively damaged polypeptides as well as certain short-lived regulatory proteins in the mitochondrial matrix. May also have a chaperone function in the assembly of inner membrane protein complexes. Participates in the regulation of mitochondrial gene expression and in the maintenance of the integrity of the mitochondrial genome. Binds to mitochondrial DNA in a site-specific manner. The polypeptide is Lon protease homolog, mitochondrial (Caenorhabditis briggsae).